The chain runs to 236 residues: uncharacterized protein (236 aa).

The DPCK domain occupies 3–208 (ILGLTGSIAT…PSYFFTLLCL (206 aa)). 8 to 15 (GSIATGKS) contacts ATP. Phosphoserine occurs at positions 82 and 86.

The protein belongs to the CoaE family.

Its subcellular location is the cytoplasm. This is an uncharacterized protein from Schizosaccharomyces pombe (strain 972 / ATCC 24843) (Fission yeast).